Reading from the N-terminus, the 1235-residue chain is Ubiquitin carboxyl-terminal hydrolase 40 (1235 aa).

One can recognise a USP domain in the interval 41 to 482 (SGIRNQGGTC…SAYMLFYRKS (442 aa)). Cysteine 50 functions as the Nucleophile in the catalytic mechanism. Residue histidine 305 is the Proton acceptor of the active site. Basic and acidic residues predominate over residues 1180–1190 (IRDDTGKEKQK). The interval 1180–1235 (IRDDTGKEKQKQRALGRRKSQEALHEQSSYILSSAETPARPRAPETSLSIHVGSFR) is disordered. Residues 1205 to 1215 (EQSSYILSSAE) show a composition bias toward polar residues.

It belongs to the peptidase C19 family. Broadly expressed.

It catalyses the reaction Thiol-dependent hydrolysis of ester, thioester, amide, peptide and isopeptide bonds formed by the C-terminal Gly of ubiquitin (a 76-residue protein attached to proteins as an intracellular targeting signal).. Its function is as follows. May be catalytically inactive. The polypeptide is Ubiquitin carboxyl-terminal hydrolase 40 (USP40) (Homo sapiens (Human)).